Consider the following 229-residue polypeptide: Cytidylate kinase (229 aa).

An ATP-binding site is contributed by 10 to 18 (GHSSSGKST).

This sequence belongs to the cytidylate kinase family. Type 1 subfamily.

The protein resides in the cytoplasm. The enzyme catalyses CMP + ATP = CDP + ADP. The catalysed reaction is dCMP + ATP = dCDP + ADP. The protein is Cytidylate kinase of Parabacteroides distasonis (strain ATCC 8503 / DSM 20701 / CIP 104284 / JCM 5825 / NCTC 11152).